The following is a 621-amino-acid chain: MKQEKKKFDAEVGKILNLMIHSLYSNKEIFMRELISNASDACDKLRYLSQSEAELVAGDSNFKITVKGDKNNGQVIIRDNGIGMNKEDLIENLGTIARSGTANFLKNLSGDSKKDNMLIGQFGVGFYSSFMVADKVTVTSRKAGEDKVYVWESEGEGEYIVSNSDREFSRGTEIALHIKKEEDSFLDHFRLKHIVKSYSDHIAVPIYFFDEGDNNEIQLNSASALWTRSKSEITEEQYKEFYKSLSYAVDDPWVTMHNKNEGAIEFTNLLFIPSSKTYDLFHPDRKRRVKLYIKRVFISDENIDLIPSYLRFLRGVVDSEDLPLNISRESLQHNNVLEKIKNAITKRVLGELKKKKEDSPDEYNNFWANFGGALKEGLCEATTDHEKLLEVCIFRSALHNKMISLDEYIKGFKEGQNTIYYLSGDNPDKLLSSPQIEGLLSKNIDVLLFTDTVDDFWVNVNSEYKGHAIKSATRSDIDVDQATSSSEEKNKDDKKSDDEYKSLTDYFKEVLGILVKDVKISKKLTSSPACLAVSEAAMDIRMERFLIEQKQIANASAKNLELNPKNKIIEKIFNDLKANNKNNEELVKLIFDQACILEGEPVADTGAFSKRLNDIVQKAIL.

Residues 1–328 form an a; substrate-binding region; that stretch reads MKQEKKKFDA…SEDLPLNISR (328 aa). The b stretch occupies residues 329–544; sequence ESLQHNNVLE…EAAMDIRMER (216 aa). The tract at residues 479 to 498 is disordered; sequence VDQATSSSEEKNKDDKKSDD. The span at 486–498 shows a compositional bias: basic and acidic residues; the sequence is SEEKNKDDKKSDD. Residues 545 to 621 are c; that stretch reads FLIEQKQIAN…LNDIVQKAIL (77 aa).

Belongs to the heat shock protein 90 family. Homodimer.

Its subcellular location is the cytoplasm. Molecular chaperone. Has ATPase activity. This is Chaperone protein HtpG from Rickettsia bellii (strain OSU 85-389).